Here is a 157-residue protein sequence, read N- to C-terminus: Endoribonuclease YbeY (157 aa).

Residues H114, H118, and H124 each contribute to the Zn(2+) site.

Belongs to the endoribonuclease YbeY family. Zn(2+) is required as a cofactor.

It localises to the cytoplasm. Functionally, single strand-specific metallo-endoribonuclease involved in late-stage 70S ribosome quality control and in maturation of the 3' terminus of the 16S rRNA. The sequence is that of Endoribonuclease YbeY from Yersinia pestis.